The sequence spans 208 residues: Large ribosomal subunit protein uL3 (208 aa).

The disordered stretch occupies residues 117–147 (FQGVIKRHGQSRGPMAHGSRYHRRPGSMGPV).

It belongs to the universal ribosomal protein uL3 family. As to quaternary structure, part of the 50S ribosomal subunit. Forms a cluster with proteins L14 and L19.

Functionally, one of the primary rRNA binding proteins, it binds directly near the 3'-end of the 23S rRNA, where it nucleates assembly of the 50S subunit. In Streptococcus equi subsp. zooepidemicus (strain H70), this protein is Large ribosomal subunit protein uL3.